A 256-amino-acid chain; its full sequence is Thioredoxin-dependent peroxide reductase, mitochondrial (256 aa).

The N-terminal 61 residues, Met1–His61, are a transit peptide targeting the mitochondrion. The 159-residue stretch at Pro63–Tyr221 folds into the Thioredoxin domain. Lys83 carries the N6-succinyllysine modification. The residue at position 91 (Lys91) is an N6-acetyllysine; alternate. Position 91 is an N6-succinyllysine; alternate (Lys91). Cys108 functions as the Cysteine sulfenic acid (-SOH) intermediate in the catalytic mechanism. At Thr146 the chain carries Phosphothreonine.

It belongs to the peroxiredoxin family. AhpC/Prx1 subfamily. In terms of assembly, homodimer; disulfide-linked, upon oxidation. 6 homodimers assemble to form a ring-like dodecamer. Interacts with NEK6. Interacts with LRRK2. Interacts with MAP3K13. Interacts with RPS6KC1 (via PX domain). Post-translationally, phosphorylated by LRRK2; phosphorylation reduces perodixase activity. In terms of processing, the enzyme can be inactivated by further oxidation of the cysteine sulfenic acid (C(P)-SOH) to sulphinic acid (C(P)-SO2H) and sulphonic acid (C(P)-SO3H) instead of its condensation to a disulfide bond. S-palmitoylated.

It is found in the mitochondrion. The protein localises to the cytoplasm. Its subcellular location is the early endosome. The catalysed reaction is a hydroperoxide + [thioredoxin]-dithiol = an alcohol + [thioredoxin]-disulfide + H2O. Functionally, thiol-specific peroxidase that catalyzes the reduction of hydrogen peroxide and organic hydroperoxides to water and alcohols, respectively. Plays a role in cell protection against oxidative stress by detoxifying peroxides. Acts synergistically with MAP3K13 to regulate the activation of NF-kappa-B in the cytosol. Required for the maintenance of physical strength. This chain is Thioredoxin-dependent peroxide reductase, mitochondrial (PRDX3), found in Pongo abelii (Sumatran orangutan).